A 391-amino-acid polypeptide reads, in one-letter code: Probable protein arginine N-methyltransferase 6.1 (391 aa).

A disordered region spans residues 1 to 35; it reads MLPSHLNGHSPLARRCPRLSAASPPATGDSDAAAA. The span at 20-35 shows a compositional bias: low complexity; it reads SAASPPATGDSDAAAA. The SAM-dependent MTase PRMT-type domain occupies 45 to 391; it reads DRIYFQSYSH…QTLVKDYAMR (347 aa). S-adenosyl-L-methionine-binding residues include H58, R67, G91, E113, and E142. Active-site residues include E156 and E165.

This sequence belongs to the class I-like SAM-binding methyltransferase superfamily. Protein arginine N-methyltransferase family. PRMT6 subfamily.

Its function is as follows. Arginine methyltransferase that can both catalyze the formation of omega-N monomethylarginine (MMA) and asymmetrical dimethylarginine (aDMA). The protein is Probable protein arginine N-methyltransferase 6.1 (PRMT6.1) of Oryza sativa subsp. japonica (Rice).